The following is a 221-amino-acid chain: Arginine ABC transporter permease protein ArtQ (221 aa).

The 194-residue stretch at 13 to 206 folds into the ABC transmembrane type-1 domain; the sequence is ALMTLGLAVC…AVTLISQVGI (194 aa). Helical transmembrane passes span 17 to 37, 49 to 69, 82 to 102, 121 to 141, and 186 to 206; these read LGLA…FAVL, VFVA…VYFG, IEFG…AAYA, GAAL…PQVW, and TWYG…QVGI.

Belongs to the binding-protein-dependent transport system permease family. HisMQ subfamily. In terms of assembly, the complex is composed of two ATP-binding proteins (ArtP), two transmembrane proteins (ArtM and ArtQ) and a solute-binding protein (ArtI).

It is found in the cell inner membrane. Its function is as follows. Part of the ABC transporter complex ArtPIQM involved in arginine transport. Probably responsible for the translocation of the substrate across the membrane. This is Arginine ABC transporter permease protein ArtQ (artQ) from Haemophilus influenzae (strain ATCC 51907 / DSM 11121 / KW20 / Rd).